Consider the following 92-residue polypeptide: Small ribosomal subunit protein uS19 (92 aa).

This sequence belongs to the universal ribosomal protein uS19 family.

Functionally, protein S19 forms a complex with S13 that binds strongly to the 16S ribosomal RNA. In Lachnoclostridium phytofermentans (strain ATCC 700394 / DSM 18823 / ISDg) (Clostridium phytofermentans), this protein is Small ribosomal subunit protein uS19.